Reading from the N-terminus, the 108-residue chain is Replication restart protein PriB (108 aa).

Positions 8–108 constitute an SSB domain; that stretch reads VDNRFSLIGK…LHAEQIEFIE (101 aa).

It belongs to the PriB family. Homodimer. Interacts with PriA and DnaT. Component of the replication restart primosome. Primosome assembly occurs via a 'hand-off' mechanism. PriA binds to replication forks, subsequently PriB then DnaT bind; DnaT then displaces ssDNA to generate the helicase loading substrate.

In terms of biological role, involved in the restart of stalled replication forks, which reloads the replicative helicase on sites other than the origin of replication; the PriA-PriB pathway is the major replication restart pathway. During primosome assembly it facilitates complex formation between PriA and DnaT on DNA; stabilizes PriA on DNA. Stimulates the DNA unwinding activity of PriA helicase. The chain is Replication restart protein PriB from Histophilus somni (strain 129Pt) (Haemophilus somnus).